The sequence spans 37 residues: Large ribosomal subunit protein bL36 (37 aa).

It belongs to the bacterial ribosomal protein bL36 family.

The protein is Large ribosomal subunit protein bL36 of Acidothermus cellulolyticus (strain ATCC 43068 / DSM 8971 / 11B).